A 287-amino-acid chain; its full sequence is Ret finger protein-like 4A-like protein 1 (287 aa).

The RING-type; degenerate zinc-finger motif lies at 11-53 (CPVCLKDLEEAVQLKCGYACCLQCLNSLQKEPDGEGLLCRFCS). Residues 78 to 276 (EPKLKSVLTM…LSICSVINPS (199 aa)) form the B30.2/SPRY domain.

In Homo sapiens (Human), this protein is Ret finger protein-like 4A-like protein 1 (RFPL4AL1).